A 2382-amino-acid chain; its full sequence is Serine/threonine-protein kinase WNK1 (2382 aa).

Disordered stretches follow at residues 1 to 81 (MSGG…RFFR) and 95 to 203 (LPGL…QQDD). Phosphoserine occurs at positions 15 and 19. Residues 50–66 (RTEEYRRRRHTMDKDSR) show a composition bias toward basic and acidic residues. At T60 the chain carries Phosphothreonine. Composition is skewed to low complexity over residues 95-108 (LPGL…PSIP) and 125-153 (VTAT…GPAP). Residues S167 and S174 each carry the phosphoserine modification. Residues 221–479 (LKFDIEIGRG…IKDLLNHAFF (259 aa)) form the Protein kinase domain. S231 contributes to the ATP binding site. Residues F283 and L299 each contribute to the chloride site. ATP contacts are provided by residues 301 to 304 (TELM) and K351. The active-site Proton acceptor is D368. Chloride-binding residues include L369 and L371. S378 and S382 each carry phosphoserine; by autocatalysis. The interval 488–555 (ELAEEDDGEK…VCEGDHKTMA (68 aa)) is autoinhibitory domain. The segment covering 573-588 (QLVREEQEKKKQEESS) has biased composition (basic and acidic residues). Disordered regions lie at residues 573 to 779 (QLVR…QPQA), 1018 to 1041 (QPGG…STQG), and 1053 to 1119 (VAQT…SRPK). Residues 598 to 614 (ASQTGIKQLPSASTGIP) are compositionally biased toward polar residues. Residues 615 to 625 (TASTTSASVST) show a composition bias toward low complexity. Residues 628–638 (EPEEPEADQHQ) form an interaction with KLHL3 region. Positions 637-689 (HQQLQYQQPSISVLSDGTVDSGQGSSVFTESRVSSQQTVSYGSQHEQAHSTGT) are enriched in polar residues. Residues 709-779 (PPSSVAQGQS…TAQPVSQPQA (71 aa)) are compositionally biased toward low complexity. A compositionally biased stretch (polar residues) spans 1025–1041 (QAPTTSSQQAVLESTQG). Positions 1053–1077 (VAQTQATQPTTLASSVDSAHSDVAS) are enriched in low complexity. A compositionally biased stretch (polar residues) spans 1080–1090 (SDGNENVPSSS). Basic residues predominate over residues 1098–1119 (TKRHYRKSVRSRSRHEKTSRPK). An RFXV motif 1 motif is present at residues 1257 to 1260 (RFIV). S1261 carries the phosphoserine modification. Composition is skewed to low complexity over residues 1457-1467 (SASAGGSTATP) and 1733-1745 (QVST…TSGV). Disordered regions lie at residues 1457–1476 (SASA…AVVS) and 1733–1790 (QVST…TQSQ). T1848 bears the Phosphothreonine mark. Residues 1859 to 1862 (RFQV) carry the RFXV motif 2 motif. The disordered stretch occupies residues 1866–1948 (ADGAQKEGKN…QPTKVGRFQV (83 aa)). The span at 1869-1884 (AQKEGKNKSEDAKSVH) shows a compositional bias: basic and acidic residues. The span at 1887-1905 (SSTSESSVLSSSSPESTLV) shows a compositional bias: low complexity. The span at 1927–1940 (KTTASEAKSDTGQP) shows a compositional bias: polar residues. 2 consecutive short sequence motifs (RFXV motif) follow at residues 1945-1948 (RFQV) and 1957-1960 (RFSV). Phosphoserine is present on residues S1978, S2002, S2011, S2012, S2027, S2029, and S2032. Basic and acidic residues predominate over residues 1994 to 2003 (PKKEKPELSE). Disordered stretches follow at residues 1994 to 2069 (PKKE…DIED) and 2101 to 2196 (LYTK…NLYS). Residues 2035-2062 (QLSSKSLPSQNLSQSLSNSFNSSYMSSD) are compositionally biased toward low complexity. Position 2121 is a phosphoserine (S2121). A compositionally biased stretch (basic residues) spans 2122 to 2134 (GRRRRPTKSKGSK). The span at 2135–2145 (SSRSSSLGNKS) shows a compositional bias: low complexity. Polar residues-rich tracts occupy residues 2146–2167 (PQLS…QQTL) and 2175–2196 (ESGQ…NLYS). The segment at 2241–2261 (SRKGTFTDDLHKLVDNWARDA) is amphipathic alpha-helix. S2270 and S2286 each carry phosphoserine. Residues 2332-2352 (PFGAQWSGTGGPAPQPLGQFQ) are disordered. Phosphoserine occurs at positions 2370 and 2372.

It belongs to the protein kinase superfamily. Ser/Thr protein kinase family. WNK subfamily. In terms of assembly, interacts with WNK3. Interacts with WNK4; inhibiting the activity of WNK4. Interacts with SGK1; promoting its activation. Associates with the mTORC2 complex. Interacts with UVRAG. Interacts (via amphipathic alpha-helix region) with EMC2; promoting the ER membrane protein complex assembly. As to quaternary structure, interacts with isoform 1; inhibiting isoform 1 activity. The cofactor is Mg(2+). Autophosphorylated at Ser-378 and Ser-382, promoting its activity. Autophosphorylation at Ser-382 is inhibited by intracellular calcium. Phosphorylation at Thr-60 increases ability to activate SGK1. Post-translationally, ubiquitinated by the BCR(KLHL3) complex, leading to its degradation. Also ubiquitinated by the BCR(KLHL2) complex. In terms of processing, may be O-glycosylated. In terms of tissue distribution, widely expressed, with highest levels observed in the testis, heart, kidney and skeletal muscle. As to expression, strong expression in dorsal root ganglia and spinal cord. This isoform is kidney-specific and specifically expressed in the distal convoluted tubule (DCT) and connecting tubule (CNT) of the nephron.

The protein resides in the cytoplasm. Its subcellular location is the nucleus. The protein localises to the cytoskeleton. It is found in the spindle. It carries out the reaction L-seryl-[protein] + ATP = O-phospho-L-seryl-[protein] + ADP + H(+). It catalyses the reaction L-threonyl-[protein] + ATP = O-phospho-L-threonyl-[protein] + ADP + H(+). Activated in response to hyperosmotic stress: cell shrinkage promotes formation of a membraneless compartment that concentrates WNK1 with its substrates, OXSR1/OSR1 and STK39/SPAK. Activation requires autophosphorylation of Ser-382 and, to a lower extent, Ser-378. Autophosphorylation and subsequent activation is inhibited by increases in intracellular ionic strength: Cl(-) potently inhibits WNK1 kinase activity via direct binding. Also inhibited by K(+) ions. Inhibited by small compounds staurosporine, tyrphostin 47, as well as Src tyrosine kinase inhibitors PP1 and PP2. In terms of biological role, serine/threonine-protein kinase component of the WNK1-SPAK/OSR1 kinase cascade, which acts as a key regulator of blood pressure and regulatory volume increase by promoting ion influx. WNK1 mediates regulatory volume increase in response to hyperosmotic stress by acting as a molecular crowding sensor, which senses cell shrinkage and mediates formation of a membraneless compartment by undergoing liquid-liquid phase separation. The membraneless compartment concentrates WNK1 with its substrates, OXSR1/OSR1 and STK39/SPAK, promoting WNK1-dependent phosphorylation and activation of downstream kinases OXSR1/OSR1 and STK39/SPAK. Following activation, OXSR1/OSR1 and STK39/SPAK catalyze phosphorylation of ion cotransporters SLC12A1/NKCC2, SLC12A2/NKCC1, SLC12A5/KCC2 and SLC12A6/KCC3, regulating their activity. Phosphorylation of Na-K-Cl cotransporters SLC12A2/NKCC1 and SLC12A2/NKCC1 promote their activation and ion influx; simultaneously, phosphorylation of K-Cl cotransporters SLC12A5/KCC2 and SLC12A6/KCC3 inhibit their activity, blocking ion efflux. Also acts as a regulator of angiogenesis in endothelial cells via activation of OXSR1/OSR1 and STK39/SPAK: activation of OXSR1/OSR1 regulates chemotaxis and invasion, while STK39/SPAK regulates endothelial cell proliferation. Also acts independently of the WNK1-SPAK/OSR1 kinase cascade by catalyzing phosphorylation of other substrates, such as SYT2, PCF11 and NEDD4L. Mediates phosphorylation of SYT2, regulating SYT2 association with phospholipids and membrane-binding. Regulates mRNA export in the nucleus by mediating phosphorylation of PCF11, thereby decreasing the association between PCF11 and POLR2A/RNA polymerase II and promoting mRNA export to the cytoplasm. Acts as a negative regulator of autophagy. Required for the abscission step during mitosis, independently of the WNK1-SPAK/OSR1 kinase cascade. May also play a role in actin cytoskeletal reorganization. Also acts as a scaffold protein independently of its protein kinase activity: negatively regulates cell membrane localization of various transporters and channels, such as SLC4A4, SLC26A6, SLC26A9, TRPV4 and CFTR. Involved in the regulation of epithelial Na(+) channel (ENaC) by promoting activation of SGK1 in a kinase-independent manner: probably acts as a scaffold protein that promotes the recruitment of SGK1 to the mTORC2 complex in response to chloride, leading to mTORC2-dependent phosphorylation and activation of SGK1. Acts as an assembly factor for the ER membrane protein complex independently of its protein kinase activity: associates with EMC2 in the cytoplasm via its amphipathic alpha-helix, and prevents EMC2 ubiquitination and subsequent degradation, thereby promoting EMC2 stabilization. Kinase-defective isoform specifically expressed in kidney, which acts as a dominant-negative regulator of the longer isoform 1. Does not directly inhibit WNK4 and has no direct effect on sodium and chloride ion transport. Down-regulates sodium-chloride cotransporter activity indirectly by inhibiting isoform 1, it associates with isoform 1 and attenuates its kinase activity. In kidney, may play an important role regulating sodium and potassium balance. The protein is Serine/threonine-protein kinase WNK1 of Homo sapiens (Human).